The primary structure comprises 125 residues: uncharacterized protein (125 aa).

The protein localises to the plastid. This is an uncharacterized protein from Euglena longa (Euglenophycean alga).